A 511-amino-acid polypeptide reads, in one-letter code: Sulfate adenylyltransferase (511 aa).

Residues 1 to 167 (MPAPHGGILQ…LEAIQLPQHY (167 aa)) form an N-terminal region. The segment at 168–393 (DYPGLRKTPA…LRESNPPRPK (226 aa)) is catalytic. Gln-195 serves as a coordination point for sulfate. ATP-binding positions include 195–198 (QTRN) and 289–292 (GRDH). Catalysis depends on residues Thr-196, Arg-197, and Asn-198. Arg-197 lines the sulfate pocket. Ala-293 is a binding site for sulfate. ATP is bound at residue Val-331. The required for oligomerization; adenylyl-sulfate kinase-like stretch occupies residues 394 to 511 (QGFSIVLGNS…FLEDNGFFVF (118 aa)).

The protein belongs to the sulfate adenylyltransferase family. As to quaternary structure, homohexamer. Dimer of trimers.

Its subcellular location is the cytoplasm. It catalyses the reaction sulfate + ATP + H(+) = adenosine 5'-phosphosulfate + diphosphate. It participates in sulfur metabolism; hydrogen sulfide biosynthesis; sulfite from sulfate: step 1/3. Catalyzes the first intracellular reaction of sulfate assimilation, forming adenosine-5'-phosphosulfate (APS) from inorganic sulfate and ATP. Plays an important role in sulfate activation as a component of the biosynthesis pathway of sulfur-containing amino acids. This is Sulfate adenylyltransferase from Saccharomyces cerevisiae (strain ATCC 204508 / S288c) (Baker's yeast).